The sequence spans 218 residues: Glutathione S-transferase Mu 1 (218 aa).

The GST N-terminal domain occupies 2–88 (PMILGYWDIR…YIARKHNLCG (87 aa)). Glutathione contacts are provided by residues 7-8 (YW), 43-46 (RSQW), Lys-50, 59-60 (NL), and 72-73 (QS). Residues 90–208 (TEEEMIRVDI…KSSRFLPGPL (119 aa)) form the GST C-terminal domain. Tyr-116 is a substrate binding site.

The protein belongs to the GST superfamily. Mu family. Homodimer.

The protein localises to the cytoplasm. The enzyme catalyses RX + glutathione = an S-substituted glutathione + a halide anion + H(+). It catalyses the reaction prostaglandin A2 + glutathione = prostaglandin A2-S-(R)-glutathione. The catalysed reaction is prostaglandin J2 + glutathione = prostaglandin J2-S-(R)-glutathione. It carries out the reaction prostaglandin J2 + glutathione = prostaglandin J2-S-(S)-glutathione. The enzyme catalyses prostaglandin A2 + glutathione = prostaglandin A2-S-(S)-glutathione. It catalyses the reaction 11(S)-hydroxy-14(S),15(S)-epoxy-(5Z,8Z,12E)-eicosatrienoate + glutathione = (11S,15S)-dihydroxy-14(R)-S-glutathionyl-(5Z,8Z,12E)-eicosatrienoate. Functionally, conjugation of reduced glutathione to a wide number of exogenous and endogenous hydrophobic electrophiles. Protects against the thiol-mediated metal-catalyzed oxidative inactivation of enzymes. Involved in the formation of glutathione conjugates of both prostaglandin A2 (PGA2) and prostaglandin J2 (PGJ2). Participates in the formation of novel hepoxilin regioisomers. The polypeptide is Glutathione S-transferase Mu 1 (GSTM1) (Bos taurus (Bovine)).